The primary structure comprises 149 residues: Macrodomain Ter protein (149 aa).

Belongs to the MatP family. In terms of assembly, homodimer.

It localises to the cytoplasm. Functionally, required for spatial organization of the terminus region of the chromosome (Ter macrodomain) during the cell cycle. Prevents early segregation of duplicated Ter macrodomains during cell division. Binds specifically to matS, which is a 13 bp signature motif repeated within the Ter macrodomain. The sequence is that of Macrodomain Ter protein from Vibrio vulnificus (strain YJ016).